Reading from the N-terminus, the 199-residue chain is Elongation factor Ts (199 aa).

Residues 81 to 84 form an involved in Mg(2+) ion dislocation from EF-Tu region; it reads TDFV.

It belongs to the EF-Ts family.

It is found in the cytoplasm. In terms of biological role, associates with the EF-Tu.GDP complex and induces the exchange of GDP to GTP. It remains bound to the aminoacyl-tRNA.EF-Tu.GTP complex up to the GTP hydrolysis stage on the ribosome. This Thermotoga petrophila (strain ATCC BAA-488 / DSM 13995 / JCM 10881 / RKU-1) protein is Elongation factor Ts.